The following is a 435-amino-acid chain: Gamma-glutamyl phosphate reductase (435 aa).

Belongs to the gamma-glutamyl phosphate reductase family.

The protein resides in the cytoplasm. The catalysed reaction is L-glutamate 5-semialdehyde + phosphate + NADP(+) = L-glutamyl 5-phosphate + NADPH + H(+). It participates in amino-acid biosynthesis; L-proline biosynthesis; L-glutamate 5-semialdehyde from L-glutamate: step 2/2. Catalyzes the NADPH-dependent reduction of L-glutamate 5-phosphate into L-glutamate 5-semialdehyde and phosphate. The product spontaneously undergoes cyclization to form 1-pyrroline-5-carboxylate. This chain is Gamma-glutamyl phosphate reductase, found in Synechococcus sp. (strain CC9605).